Reading from the N-terminus, the 341-residue chain is Beta-ketoacyl-[acyl-carrier-protein] synthase III 1 (341 aa).

Residues cysteine 113 and histidine 249 contribute to the active site. An ACP-binding region spans residues 250–254 (QANIR). The active site involves asparagine 279.

The protein belongs to the thiolase-like superfamily. FabH family. Homodimer.

Its subcellular location is the cytoplasm. The catalysed reaction is malonyl-[ACP] + acetyl-CoA + H(+) = 3-oxobutanoyl-[ACP] + CO2 + CoA. It functions in the pathway lipid metabolism; fatty acid biosynthesis. Functionally, catalyzes the condensation reaction of fatty acid synthesis by the addition to an acyl acceptor of two carbons from malonyl-ACP. Catalyzes the first condensation reaction which initiates fatty acid synthesis and may therefore play a role in governing the total rate of fatty acid production. Possesses both acetoacetyl-ACP synthase and acetyl transacylase activities. Its substrate specificity determines the biosynthesis of branched-chain and/or straight-chain of fatty acids. The chain is Beta-ketoacyl-[acyl-carrier-protein] synthase III 1 from Deinococcus radiodurans (strain ATCC 13939 / DSM 20539 / JCM 16871 / CCUG 27074 / LMG 4051 / NBRC 15346 / NCIMB 9279 / VKM B-1422 / R1).